We begin with the raw amino-acid sequence, 20 residues long: Equinatoxin-1'' (20 aa).

A plays an important role in the hemolytic activity region spans residues 3 to 12 (AVAGAVIEGA). Residues 11–20 (GATLTFNVLQ) are N-terminal region.

Belongs to the actinoporin family. Sea anemone subfamily. As to quaternary structure, octamer or nonamer in membranes. Monomer in the soluble state.

It is found in the secreted. It localises to the nematocyst. The protein localises to the target cell membrane. Functionally, pore-forming protein that forms cations-selective hydrophilic pores of around 1 nm and causes cardiac stimulation and cytolysis. Pore formation is a multi-step process that involves specific recognition of membrane sphingomyelin (but neither cholesterol nor phosphatidylcholine) using aromatic rich region and adjacent phosphocholine (POC) binding site, firm binding to the membrane (mainly driven by hydrophobic interactions) accompanied by the transfer of the N-terminal region to the lipid-water interface and finally pore formation after oligomerization of monomers. Cytolytic effects include red blood cells hemolysis, platelet aggregation and lysis, cytotoxic and cytostatic effects on fibroblasts. Lethality in mammals has been ascribed to severe vasospasm of coronary vessels, cardiac arrhythmia, and inotropic effects. The polypeptide is Equinatoxin-1'' (Actinia equina (Beadlet anemone)).